The following is a 772-amino-acid chain: Rho guanine nucleotide exchange factor 6 (772 aa).

The 111-residue stretch at 1 to 111 (MNPEERVVTW…TLLAVNKATE (111 aa)) folds into the Calponin-homology (CH) domain. Positions 115–158 (SERPCGRSSSLSATTSSQTNPQAAVPSTTPEQQSEEKAAEMTEN) are disordered. Low complexity predominate over residues 122–133 (SSSLSATTSSQT). At serine 126 the chain carries Phosphoserine. Phosphothreonine is present on threonine 133. Polar residues predominate over residues 134-146 (NPQAAVPSTTPEQ). An SH3 domain is found at 160 to 219 (SHQLIVKARFNFKQTNEDELSVCKGDIIYVTRVEEGGWWEGTLNGRTGWFPSNYVREIKP). Position 225 is a phosphoserine (serine 225). Positions 241–421 (YYTVVLQNIL…KSLMGQCQDL (181 aa)) constitute a DH domain. Positions 443–548 (DIKTLGNVIF…WMEQLNRLTK (106 aa)) constitute a PH domain. Residue serine 488 is modified to Phosphoserine. Over residues 557-573 (SKTSSSSCSTHSSFSST) the composition is skewed to low complexity. A disordered region spans residues 557 to 581 (SKTSSSSCSTHSSFSSTGQPRGPLE). Phosphoserine is present on residues serine 640 and serine 680.

Interacts with PAK kinases through the SH3 domain. Interacts with GIT1. Interacts with PARVB. Component of cytoplasmic complexes, which also contain PXN, GIT1 and PAK1. Interacts with BIN2. Identified in a complex with BIN2 and GIT2. Interacts with PARVG; the guanine nucleotide exchange factor activity of ARHGEF6 is essential for PARVG-induced enhancement of cell spreading.

It is found in the cell projection. The protein resides in the lamellipodium. Functionally, acts as a RAC1 guanine nucleotide exchange factor (GEF). This is Rho guanine nucleotide exchange factor 6 (Arhgef6) from Rattus norvegicus (Rat).